Consider the following 629-residue polypeptide: Pentatricopeptide repeat-containing protein At1g62930, chloroplastic (629 aa).

The N-terminal 41 residues, 1–41 (MTSCVHLGIVASQSKKMSLAKRFAQLRKASPLFSLRGVYFS), are a transit peptide targeting the chloroplast. PPR repeat units follow at residues 79–113 (SIVE…RISY), 114–148 (DLYS…GYEP), 149–183 (DIVT…EYQP), 184–218 (NTVT…GCQP), 219–253 (DLFT…KIEA), 254–288 (DVVI…GIRP), 289–323 (NVVT…KINP), 324–358 (NVVT…SIDP), 359–393 (DIFT…DCFP), 394–428 (NVVT…GLVG), 429–463 (NTVT…GVPP), 464–498 (DIIT…KMEP), 499–533 (DIYT…GVKP), 534–568 (NVII…GTLP), and 569–603 (NSGT…GFVG).

It belongs to the PPR family. P subfamily.

The protein resides in the plastid. It localises to the chloroplast. The protein is Pentatricopeptide repeat-containing protein At1g62930, chloroplastic of Arabidopsis thaliana (Mouse-ear cress).